A 109-amino-acid chain; its full sequence is Oncomodulin-1 (109 aa).

N-acetylserine is present on Ser2. 2 consecutive EF-hand domains span residues 39-74 and 78-109; these read MSAN…FESG and LTES…MVHS. Residues Asp52, Asp54, Ser56, Tyr58, Glu63, Asp91, Asp93, Asp95, Lys97, and Glu102 each coordinate Ca(2+).

This sequence belongs to the parvalbumin family.

Functionally, has some calmodulin-like activity with respect to enzyme activation and growth regulation. Binds two calcium ions. This is Oncomodulin-1 (OCM) from Homo sapiens (Human).